The chain runs to 326 residues: Cyclin-dependent kinase 1 (326 aa).

A Protein kinase domain is found at 16–306; sequence FTKLEKIGEG…SKKALHHPYF (291 aa). ATP is bound by residues 22–30 and Lys-45; that span reads IGEGTYGVV. Asp-140 acts as the Proton acceptor in catalysis.

It belongs to the protein kinase superfamily. CMGC Ser/Thr protein kinase family. CDC2/CDKX subfamily. Forms a stable but non-covalent complex with a regulatory subunit and with a cyclin. Interacts with cks-1.

Its subcellular location is the nucleus. The protein localises to the cytoplasm. It is found in the cytoskeleton. The protein resides in the microtubule organizing center. It localises to the centrosome. It carries out the reaction L-seryl-[protein] + ATP = O-phospho-L-seryl-[protein] + ADP + H(+). The enzyme catalyses L-threonyl-[protein] + ATP = O-phospho-L-threonyl-[protein] + ADP + H(+). The catalysed reaction is [DNA-directed RNA polymerase] + ATP = phospho-[DNA-directed RNA polymerase] + ADP + H(+). Its activity is regulated as follows. Phosphorylation both activates and inactivates the enzyme depending on the site of phosphorylation. Functionally, plays a key role in the control of the eukaryotic cell cycle. Required for entry into S-phase and mitosis. Acts as a component of the kinase complex that phosphorylates the repetitive C-terminus of RNA polymerase II. May function in concert with npp-16 to arrest prophase blastomeres in response to anoxia. The polypeptide is Cyclin-dependent kinase 1 (Caenorhabditis briggsae).